The sequence spans 262 residues: Nitrate transport protein NasD (262 aa).

Residues 5–239 (IQVQGVSQRF…RPRNRVQLAD (235 aa)) form the ABC transporter domain. 41–48 (GHSGCGKS) contacts ATP.

It belongs to the ABC transporter superfamily.

The protein localises to the cell membrane. Functionally, probably part of a high-affinity binding-protein-dependent transport system for nitrate. Probably responsible for energy coupling to the transport system. This chain is Nitrate transport protein NasD (nasD), found in Klebsiella oxytoca.